The primary structure comprises 291 residues: Pyridoxal 5'-phosphate synthase subunit PdxS (291 aa).

Aspartate 23 is a D-ribose 5-phosphate binding site. The active-site Schiff-base intermediate with D-ribose 5-phosphate is the lysine 80. Glycine 152 is a D-ribose 5-phosphate binding site. D-glyceraldehyde 3-phosphate is bound at residue arginine 164. D-ribose 5-phosphate-binding positions include glycine 213 and 234–235 (GS).

Belongs to the PdxS/SNZ family. In the presence of PdxT, forms a dodecamer of heterodimers.

The enzyme catalyses aldehydo-D-ribose 5-phosphate + D-glyceraldehyde 3-phosphate + L-glutamine = pyridoxal 5'-phosphate + L-glutamate + phosphate + 3 H2O + H(+). The protein operates within cofactor biosynthesis; pyridoxal 5'-phosphate biosynthesis. In terms of biological role, catalyzes the formation of pyridoxal 5'-phosphate from ribose 5-phosphate (RBP), glyceraldehyde 3-phosphate (G3P) and ammonia. The ammonia is provided by the PdxT subunit. Can also use ribulose 5-phosphate and dihydroxyacetone phosphate as substrates, resulting from enzyme-catalyzed isomerization of RBP and G3P, respectively. The polypeptide is Pyridoxal 5'-phosphate synthase subunit PdxS (Desulfitobacterium hafniense (strain DSM 10664 / DCB-2)).